A 286-amino-acid polypeptide reads, in one-letter code: Shikimate dehydrogenase (NADP(+)) (286 aa).

Residues 19–21 and Thr66 each bind shikimate; that span reads SVS. Lys70 (proton acceptor) is an active-site residue. Asn91 and Asp106 together coordinate shikimate. Residues 130 to 134 and Ala225 each bind NADP(+); that span reads GAGGS. Residue Tyr227 participates in shikimate binding. Gly248 contacts NADP(+).

Belongs to the shikimate dehydrogenase family. As to quaternary structure, homodimer.

The enzyme catalyses shikimate + NADP(+) = 3-dehydroshikimate + NADPH + H(+). Its pathway is metabolic intermediate biosynthesis; chorismate biosynthesis; chorismate from D-erythrose 4-phosphate and phosphoenolpyruvate: step 4/7. Functionally, involved in the biosynthesis of the chorismate, which leads to the biosynthesis of aromatic amino acids. Catalyzes the reversible NADPH linked reduction of 3-dehydroshikimate (DHSA) to yield shikimate (SA). The chain is Shikimate dehydrogenase (NADP(+)) from Dehalococcoides mccartyi (strain ATCC BAA-2100 / JCM 16839 / KCTC 5957 / BAV1).